The following is a 308-amino-acid chain: Protein translocase subunit SecF (308 aa).

6 helical membrane passes run 18–38 (AYVF…TRGL), 134–154 (GAIY…LIRF), 160–180 (LGAV…FSLL), 193–213 (TIIA…VVVF), 244–264 (IITS…GGEV), and 272–292 (LIVG…PVVI).

Belongs to the SecD/SecF family. SecF subfamily. In terms of assembly, forms a complex with SecD. Part of the essential Sec protein translocation apparatus which comprises SecA, SecYEG and auxiliary proteins SecDF. Other proteins may also be involved.

The protein resides in the cell inner membrane. Its function is as follows. Part of the Sec protein translocase complex. Interacts with the SecYEG preprotein conducting channel. SecDF uses the proton motive force (PMF) to complete protein translocation after the ATP-dependent function of SecA. This is Protein translocase subunit SecF from Rhodothermus marinus (strain ATCC 43812 / DSM 4252 / R-10) (Rhodothermus obamensis).